The sequence spans 88 residues: MSRSLRKGPFVDHSLIKKVRAMNLLEKKTPIKTWSRRSMITPEMIGHTFEVHNGKKFLTVFVSETMVGHKLGEFSPTRIFKSHPVKKG.

Belongs to the universal ribosomal protein uS19 family.

Protein S19 forms a complex with S13 that binds strongly to the 16S ribosomal RNA. The protein is Small ribosomal subunit protein uS19 of Chlamydia abortus (strain DSM 27085 / S26/3) (Chlamydophila abortus).